A 256-amino-acid polypeptide reads, in one-letter code: POU domain class 2-associating factor 1 (256 aa).

Residues 1-23 (MLWQKPTAPEQAPAPARPYQGVR) form a disordered region. One can recognise an OCA domain in the interval 16 to 38 (ARPYQGVRVKEPVKELLRRKRGH).

This sequence belongs to the POU2AF family. In terms of assembly, interacts with POU2F1/OCT1 and POU2F2/OCT2; the interaction increases POU2F1 and POU2F2 transactivation activity. Post-translationally, ubiquitinated; mediated by SIAH1 or SIAH2 and leading to its subsequent proteasomal degradation. B-cell specific. Detected in mainly in spleen, but also in thymus, periphral blood leukocyte and small intestine.

Its subcellular location is the nucleus. Its function is as follows. Transcriptional coactivator that specifically associates with either POU2F1/OCT1 or POU2F2/OCT2. It boosts the POU2F1/OCT1 mediated promoter activity and to a lesser extent, that of POU2F2/OCT2. It recognizes the POU domains of POU2F1/OCT1 and POU2F2/OCT2. It is essential for the response of B-cells to antigens and required for the formation of germinal centers. Regulates IL6 expression in B cells as POU2F2/OCT2 coactivator. The protein is POU domain class 2-associating factor 1 of Homo sapiens (Human).